The sequence spans 190 residues: Lipid A acyltransferase PagP (190 aa).

Residues 1–18 form the signal peptide; it reads MKRLISCLTIICALNASA. Catalysis depends on residues histidine 60, aspartate 103, and serine 104.

The protein belongs to the lipid A palmitoyltransferase family. As to quaternary structure, homodimer.

It is found in the cell outer membrane. The catalysed reaction is a lipid A + a 1,2-diacyl-sn-glycero-3-phosphocholine = a hepta-acyl lipid A + a 2-acyl-sn-glycero-3-phosphocholine. It carries out the reaction a lipid IVA + a 1,2-diacyl-sn-glycero-3-phosphocholine = a lipid IVB + a 2-acyl-sn-glycero-3-phosphocholine. It catalyses the reaction a lipid IIA + a 1,2-diacyl-sn-glycero-3-phosphocholine = a lipid IIB + a 2-acyl-sn-glycero-3-phosphocholine. Functionally, transfers a fatty acid residue from the sn-1 position of a phospholipid to the N-linked hydroxyfatty acid chain on the proximal unit of lipid A or its precursors. The chain is Lipid A acyltransferase PagP from Legionella pneumophila subsp. pneumophila (strain Philadelphia 1 / ATCC 33152 / DSM 7513).